Here is a 169-residue protein sequence, read N- to C-terminus: MATSSTVLFLLLAVFAASASAATFTITNNCGYTVWPAAIPVGGGQQLDQGQTWTLNVPAGTNSGRIWGRTGCSFNGGSGSCQTGDCAGALSCTLSGQPATLAEFSIGGEHDYYDISVIDVYNLAMDFSCSTGDALQCRDSSCPDAYHQPDDPKTHSCNTNSNYQITFCP.

The signal sequence occupies residues 1–21 (MATSSTVLFLLLAVFAASASA).

The protein belongs to the thaumatin family.

Its function is as follows. Associated with resistance against stem rust fungi. The polypeptide is Thaumatin-like pathogenesis-related protein 4 (RASTL-4) (Avena sativa (Oat)).